Consider the following 286-residue polypeptide: Probable ketoamine kinase YniA (286 aa).

91–93 contacts ATP; that stretch reads DYL. Residue Asp-193 is the Proton acceptor of the active site.

Belongs to the fructosamine kinase family.

Its function is as follows. Ketoamine kinase that phosphorylates ketoamines on the third carbon of the sugar moiety to generate ketoamine 3-phosphate. Its precise substrate are unknown: does not have ribulosamine and/or erythrulosamine 3-kinase activity in vitro. In Escherichia coli (strain K12), this protein is Probable ketoamine kinase YniA (yniA).